The sequence spans 362 residues: Erythritol/L-threitol dehydrogenase (362 aa).

Zn(2+)-binding residues include Cys-45, His-76, Glu-77, Cys-109, Cys-112, Cys-115, and Cys-123. Residues Ile-195 and Asp-215 each coordinate NAD(+).

It belongs to the zinc-containing alcohol dehydrogenase family. Zn(2+) is required as a cofactor.

It carries out the reaction erythritol + NAD(+) = D-erythrulose + NADH + H(+). The enzyme catalyses L-threitol + NAD(+) = L-erythrulose + NADH + H(+). It participates in carbohydrate metabolism; erythritol degradation. Its pathway is carbohydrate metabolism; L-threitol degradation. Its function is as follows. Catalyzes the NAD-dependent reversible oxidation of erythritol and L-threitol. Involved in the degradation pathways of erythritol and L-threitol, that allow M.smegmatis to grow on these compounds as the sole carbon source. The sequence is that of Erythritol/L-threitol dehydrogenase from Mycolicibacterium smegmatis (strain ATCC 700084 / mc(2)155) (Mycobacterium smegmatis).